The chain runs to 723 residues: Polyribonucleotide nucleotidyltransferase (723 aa).

Residues Asp488 and Asp494 each coordinate Mg(2+). The 60-residue stretch at 555–614 (PRMITMKIHPDKIREVIGKGGSTIQALTKETGTTIDIQEDGTITIASTSTDGMAEAKRRI) folds into the KH domain. The S1 motif domain occupies 624-692 (GKIYAGTVLK…EKGRLRLSLK (69 aa)). The segment at 701–723 (SISPINAGEAAAPAAPAEGSEQQ) is disordered. Residues 707–723 (AGEAAAPAAPAEGSEQQ) show a composition bias toward low complexity.

The protein belongs to the polyribonucleotide nucleotidyltransferase family. Requires Mg(2+) as cofactor.

It is found in the cytoplasm. It catalyses the reaction RNA(n+1) + phosphate = RNA(n) + a ribonucleoside 5'-diphosphate. Functionally, involved in mRNA degradation. Catalyzes the phosphorolysis of single-stranded polyribonucleotides processively in the 3'- to 5'-direction. The protein is Polyribonucleotide nucleotidyltransferase of Cupriavidus necator (strain ATCC 17699 / DSM 428 / KCTC 22496 / NCIMB 10442 / H16 / Stanier 337) (Ralstonia eutropha).